Here is a 277-residue protein sequence, read N- to C-terminus: Energy-coupling factor transporter ATP-binding protein EcfA1 (277 aa).

Residues 4–238 form the ABC transporter domain; the sequence is IETQDLCHTY…PDLLSSVRLD (235 aa). 37 to 44 contributes to the ATP binding site; that stretch reads GPNGAGKS.

This sequence belongs to the ABC transporter superfamily. Energy-coupling factor EcfA family. As to quaternary structure, forms a stable energy-coupling factor (ECF) transporter complex composed of 2 membrane-embedded substrate-binding proteins (S component), 2 ATP-binding proteins (A component) and 2 transmembrane proteins (T component).

It is found in the cell membrane. Functionally, ATP-binding (A) component of a common energy-coupling factor (ECF) ABC-transporter complex. Unlike classic ABC transporters this ECF transporter provides the energy necessary to transport a number of different substrates. This is Energy-coupling factor transporter ATP-binding protein EcfA1 from Methanospirillum hungatei JF-1 (strain ATCC 27890 / DSM 864 / NBRC 100397 / JF-1).